A 213-amino-acid polypeptide reads, in one-letter code: Protein ras-1 (213 aa).

GTP is bound at residue 15 to 22 (GGGGVGKS). The short motif at 37-45 (YDPTIEDSY) is the Effector region element. Residues 62–66 (DTAGQ) and 121–124 (NKYD) contribute to the GTP site. The residue at position 210 (Cys210) is a Cysteine methyl ester. Cys210 is lipidated: S-farnesyl cysteine. A propeptide spans 211–213 (IMM) (removed in mature form).

Belongs to the small GTPase superfamily. Ras family.

Its subcellular location is the cell membrane. The catalysed reaction is GTP + H2O = GDP + phosphate + H(+). Ras proteins bind GDP/GTP and possess intrinsic GTPase activity. The sequence is that of Protein ras-1 (ras-1) from Neurospora crassa (strain ATCC 24698 / 74-OR23-1A / CBS 708.71 / DSM 1257 / FGSC 987).